We begin with the raw amino-acid sequence, 221 residues long: Phosphate-specific transport system accessory protein PhoU homolog 1 (221 aa).

It belongs to the PhoU family. As to quaternary structure, homodimer.

It localises to the cytoplasm. Functionally, plays a role in the regulation of phosphate uptake. In this role, it may bind, possibly as a chaperone, to PhoR, PhoP or a PhoR-PhoP complex to promote dephosphorylation of phospho-PhoP, or inhibit formation of the PhoR-PhoP transitory complex. The sequence is that of Phosphate-specific transport system accessory protein PhoU homolog 1 (phoU1) from Mycobacterium bovis (strain ATCC BAA-935 / AF2122/97).